Reading from the N-terminus, the 682-residue chain is Putative L-type lectin-domain containing receptor kinase I.1 (682 aa).

Positions M1–L19 are cleaved as a signal peptide. At I20–P292 the chain is on the extracellular side. The interval D27–S264 is legume-lectin like. N60, N130, N187, N210, and N231 each carry an N-linked (GlcNAc...) asparagine glycan. Residues L293–Y313 form a helical membrane-spanning segment. Topologically, residues L314–R682 are cytoplasmic. The region spanning F348–L622 is the Protein kinase domain. Residues L354–V362 and K376 each bind ATP. The active-site Proton acceptor is the D472.

This sequence in the C-terminal section; belongs to the protein kinase superfamily. Ser/Thr protein kinase family. It in the N-terminal section; belongs to the leguminous lectin family.

It localises to the cell membrane. It catalyses the reaction L-seryl-[protein] + ATP = O-phospho-L-seryl-[protein] + ADP + H(+). The catalysed reaction is L-threonyl-[protein] + ATP = O-phospho-L-threonyl-[protein] + ADP + H(+). Its function is as follows. Involved in resistance response to the pathogenic fungus Alternaria brassicicola. The sequence is that of Putative L-type lectin-domain containing receptor kinase I.1 from Arabidopsis thaliana (Mouse-ear cress).